The chain runs to 70 residues: DNA-binding transcriptional activator AlpA (70 aa).

Residues 12 to 31 (LPAVIQKTGMARATIYDWLN) constitute a DNA-binding region (H-T-H motif).

In terms of biological role, positive regulator of the expression of the slpA gene. When overexpressed, leads to suppression of the capsule overproduction and UV sensitivity phenotypes of cells mutant for the Lon ATP-dependent protease. Part of the cryptic P4-like prophage CP4-57. Overexpression of AlpA leads to excision of the CP4-57 prophage by IntA. This inactivates ssrA (the gene upstream of the prophage) that encodes tmRNA which is required to rescue stalled ribosomes in a process known as trans-translation. This chain is DNA-binding transcriptional activator AlpA, found in Escherichia coli (strain K12).